A 212-amino-acid chain; its full sequence is Thiamine-phosphate synthase (212 aa).

Residues 43–47 (QYRNK) and Asn75 contribute to the 4-amino-2-methyl-5-(diphosphooxymethyl)pyrimidine site. 2 residues coordinate Mg(2+): Asp76 and Asp95. Ser114 is a 4-amino-2-methyl-5-(diphosphooxymethyl)pyrimidine binding site. Residue 141–143 (SMT) participates in 2-[(2R,5Z)-2-carboxy-4-methylthiazol-5(2H)-ylidene]ethyl phosphate binding. Residue Lys144 coordinates 4-amino-2-methyl-5-(diphosphooxymethyl)pyrimidine. Gly171 provides a ligand contact to 2-[(2R,5Z)-2-carboxy-4-methylthiazol-5(2H)-ylidene]ethyl phosphate.

Belongs to the thiamine-phosphate synthase family. Mg(2+) serves as cofactor.

It catalyses the reaction 2-[(2R,5Z)-2-carboxy-4-methylthiazol-5(2H)-ylidene]ethyl phosphate + 4-amino-2-methyl-5-(diphosphooxymethyl)pyrimidine + 2 H(+) = thiamine phosphate + CO2 + diphosphate. The catalysed reaction is 2-(2-carboxy-4-methylthiazol-5-yl)ethyl phosphate + 4-amino-2-methyl-5-(diphosphooxymethyl)pyrimidine + 2 H(+) = thiamine phosphate + CO2 + diphosphate. The enzyme catalyses 4-methyl-5-(2-phosphooxyethyl)-thiazole + 4-amino-2-methyl-5-(diphosphooxymethyl)pyrimidine + H(+) = thiamine phosphate + diphosphate. It functions in the pathway cofactor biosynthesis; thiamine diphosphate biosynthesis; thiamine phosphate from 4-amino-2-methyl-5-diphosphomethylpyrimidine and 4-methyl-5-(2-phosphoethyl)-thiazole: step 1/1. Functionally, condenses 4-methyl-5-(beta-hydroxyethyl)thiazole monophosphate (THZ-P) and 2-methyl-4-amino-5-hydroxymethyl pyrimidine pyrophosphate (HMP-PP) to form thiamine monophosphate (TMP). This chain is Thiamine-phosphate synthase, found in Nitrosomonas eutropha (strain DSM 101675 / C91 / Nm57).